A 233-amino-acid polypeptide reads, in one-letter code: Small ribosomal subunit protein uS3 (233 aa).

Positions 28 to 96 constitute a KH type-2 domain; that stretch reads EFADNLDSDF…LRKVVADIAG (69 aa).

The protein belongs to the universal ribosomal protein uS3 family. In terms of assembly, part of the 30S ribosomal subunit. Forms a tight complex with proteins S10 and S14.

Binds the lower part of the 30S subunit head. Binds mRNA in the 70S ribosome, positioning it for translation. This chain is Small ribosomal subunit protein uS3, found in Shigella flexneri.